An 83-amino-acid polypeptide reads, in one-letter code: Mu-theraphotoxin-Hhn2o (83 aa).

An N-terminal signal peptide occupies residues methionine 1–alanine 21. A propeptide spanning residues serine 22–arginine 48 is cleaved from the precursor. 3 cysteine pairs are disulfide-bonded: cysteine 50–cysteine 65, cysteine 57–cysteine 70, and cysteine 64–cysteine 77. Leucine 81 is modified (leucine amide).

Belongs to the neurotoxin 10 (Hwtx-1) family. 15 (Hntx-3) subfamily. Monomer. Expressed by the venom gland.

The protein localises to the secreted. Lethal neurotoxin. Selectively blocks tetrodotoxin-sensitive voltage-gated sodium channels (Nav). Does not affect tetrodotoxin-resistant voltage-gated sodium channels or calcium channels. This chain is Mu-theraphotoxin-Hhn2o, found in Cyriopagopus hainanus (Chinese bird spider).